A 623-amino-acid polypeptide reads, in one-letter code: EIN3-binding F-box protein 2 (623 aa).

The region spanning 52–106 (QTSIDVLPEECLFEILRRLPSGQERSACACVSKHWLNLLSSISRSEVNESSVQDV) is the F-box domain. LRR repeat units follow at residues 119-147 (GKKA…QIRG), 151-176 (ESKV…SLWN), 177-202 (LPAV…DLSR), 203-228 (CPGI…TIDS), 229-254 (CSGV…SIRS), 255-281 (CPRI…KLQM), 307-334 (LQGV…SVMS), 335-360 (CRGM…SLNK), 361-386 (CLLV…KLEE), 387-413 (CHRI…SLAN), 414-441 (CLGI…SIRC), 442-467 (CPGF…ELCG), 468-494 (LNGV…NLSE), 495-521 (CINV…NLDG), 522-547 (CKNI…DISN), 548-574 (TLVS…SIGG), 575-600 (CSSI…NIQR), and 601-623 (CGRI…DILY).

Part of a SCF (SKP1-cullin-F-box) protein ligase complex. Interacts with CUL1, SKP1A/ASK1, SKP1B/ASK2, EIN3, and EIL1. In terms of tissue distribution, ubiquitous.

It localises to the nucleus. Its pathway is protein modification; protein ubiquitination. Functionally, component of SCF(EBF1) E3 ubiquitin ligase complexes, which may mediate the ubiquitination and subsequent proteasomal degradation of target proteins (probably including EIN3 and EIL1). Regulator of the ethylene signaling cascade by modulating the stability of EIN3 and EIL1 proteins. The protein is EIN3-binding F-box protein 2 (EBF2) of Arabidopsis thaliana (Mouse-ear cress).